Reading from the N-terminus, the 170-residue chain is Crossover junction endodeoxyribonuclease RuvC (170 aa).

Catalysis depends on residues D11, E71, and D143. 3 residues coordinate Mg(2+): D11, E71, and D143.

The protein belongs to the RuvC family. In terms of assembly, homodimer which binds Holliday junction (HJ) DNA. The HJ becomes 2-fold symmetrical on binding to RuvC with unstacked arms; it has a different conformation from HJ DNA in complex with RuvA. In the full resolvosome a probable DNA-RuvA(4)-RuvB(12)-RuvC(2) complex forms which resolves the HJ. It depends on Mg(2+) as a cofactor.

Its subcellular location is the cytoplasm. It carries out the reaction Endonucleolytic cleavage at a junction such as a reciprocal single-stranded crossover between two homologous DNA duplexes (Holliday junction).. Its function is as follows. The RuvA-RuvB-RuvC complex processes Holliday junction (HJ) DNA during genetic recombination and DNA repair. Endonuclease that resolves HJ intermediates. Cleaves cruciform DNA by making single-stranded nicks across the HJ at symmetrical positions within the homologous arms, yielding a 5'-phosphate and a 3'-hydroxyl group; requires a central core of homology in the junction. The consensus cleavage sequence is 5'-(A/T)TT(C/G)-3'. Cleavage occurs on the 3'-side of the TT dinucleotide at the point of strand exchange. HJ branch migration catalyzed by RuvA-RuvB allows RuvC to scan DNA until it finds its consensus sequence, where it cleaves and resolves the cruciform DNA. This is Crossover junction endodeoxyribonuclease RuvC from Rhizobium rhizogenes (strain K84 / ATCC BAA-868) (Agrobacterium radiobacter).